The sequence spans 160 residues: Thialysine N-epsilon-acetyltransferase (160 aa).

The N-acetyltransferase domain maps to 4-159 (FEIVTVTPDH…DGAAINKFAD (156 aa)). Residues 84 to 86 (LYI), 92 to 97 (RMGLAR), 123 to 126 (NKNA), and 130 to 133 (YDTV) each bind acetyl-CoA.

The protein belongs to the acetyltransferase family. As to quaternary structure, homodimer.

The enzyme catalyses S-(2-aminoethyl)-L-cysteine + acetyl-CoA = S-(2-acetamidoethyl)-L-cysteine + CoA + H(+). It carries out the reaction O-(2-aminoethyl)-L-serine + acetyl-CoA = O-(2-acetamidoethyl)-L-serine + CoA + H(+). It catalyses the reaction S-(2-aminoethyl)-homocysteine + acetyl-CoA = S-(2-acetamidoethyl)-homocysteine + CoA + H(+). Functionally, catalyzes the N-acetylation of the amino acid thialysine (S-(2-aminoethyl)-L-cysteine), a L-lysine analog with the 4-methylene group substituted with a sulfur. Substrate specificity: thialysine &gt; O-(2-aminoethyl)-L-serine &gt; S-(2-aminoethyl)-D,L-homocysteine. Does not act on polyamines, such as spermidine and spermine, nor on diamines putrescine and cadaverine. This is Thialysine N-epsilon-acetyltransferase from Caenorhabditis elegans.